The sequence spans 333 residues: Gamma-D-glutamyl-L-lysine dipeptidyl-peptidase (333 aa).

The N-terminal stretch at 1 to 23 is a signal peptide; sequence MKKVGTAFLTTLFIFSSFTSAHA. Substrate-binding positions include glutamate 83, tyrosine 118, 237–239, and 256–257; these read DCS and DS. Positions 208-332 constitute a NlpC/P60 domain; the sequence is TPAADDLINT…EEYAGARRYL (125 aa). Cysteine 238 acts as the Nucleophile in catalysis. The active-site Proton acceptor is histidine 291. Histidine 303 is an active-site residue.

Belongs to the peptidase C40 family. Monomer in solution.

The enzyme catalyses The enzyme releases L-Ala-gamma-D-Glu dipeptides from cell wall peptides via cleavage of an L-Ala-gamma-D-Glu-|-L-Lys bond.. The protein operates within cell wall degradation; peptidoglycan degradation. Functionally, specifically hydrolyzes gamma-D-glutamyl-L-lysine bonds in murein peptides, releasing L-Ala-D-Glu. The polypeptide is Gamma-D-glutamyl-L-lysine dipeptidyl-peptidase (Bacillus cereus (strain ATCC 10987 / NRS 248)).